A 454-amino-acid chain; its full sequence is tRNA modification GTPase MnmE (454 aa).

Arg-23, Glu-80, and Lys-120 together coordinate (6S)-5-formyl-5,6,7,8-tetrahydrofolate. In terms of domain architecture, TrmE-type G spans 216-377 (GMKVVIAGRP…LRNHLKQSMG (162 aa)). Asn-226 contacts K(+). GTP-binding positions include 226-231 (NAGKSS), 245-251 (TDIAGTT), 270-273 (DTAG), 335-338 (NKAD), and 358-360 (SAR). Residue Ser-230 coordinates Mg(2+). Thr-245, Ile-247, and Thr-250 together coordinate K(+). Position 251 (Thr-251) interacts with Mg(2+). Lys-454 is a binding site for (6S)-5-formyl-5,6,7,8-tetrahydrofolate.

The protein belongs to the TRAFAC class TrmE-Era-EngA-EngB-Septin-like GTPase superfamily. TrmE GTPase family. As to quaternary structure, homodimer. Heterotetramer of two MnmE and two MnmG subunits. K(+) serves as cofactor.

Its subcellular location is the cytoplasm. Its function is as follows. Exhibits a very high intrinsic GTPase hydrolysis rate. Involved in the addition of a carboxymethylaminomethyl (cmnm) group at the wobble position (U34) of certain tRNAs, forming tRNA-cmnm(5)s(2)U34. The polypeptide is tRNA modification GTPase MnmE (Escherichia coli O6:K15:H31 (strain 536 / UPEC)).